Here is a 319-residue protein sequence, read N- to C-terminus: ATP-dependent 6-phosphofructokinase (319 aa).

ATP is bound at residue Gly-11. ADP contacts are provided by residues 21 to 25 and Asp-59; that span reads RSVVR. ATP-binding positions include 72-73 and 102-105; these read RC and GDGS. Asp-103 lines the Mg(2+) pocket. Substrate is bound at residue 125–127; that stretch reads TID. Asp-127 functions as the Proton acceptor in the catalytic mechanism. An ADP-binding site is contributed by Arg-154. Residues Arg-162 and 169–171 each bind substrate; that span reads MGR. ADP contacts are provided by residues 185 to 187, Arg-211, and 213 to 215; these read GAE and KKH. Residues Glu-222, Arg-243, and 249-252 contribute to the substrate site; that span reads HVQR.

Belongs to the phosphofructokinase type A (PFKA) family. ATP-dependent PFK group I subfamily. Prokaryotic clade 'B1' sub-subfamily. As to quaternary structure, homotetramer. Mg(2+) serves as cofactor.

Its subcellular location is the cytoplasm. The catalysed reaction is beta-D-fructose 6-phosphate + ATP = beta-D-fructose 1,6-bisphosphate + ADP + H(+). It participates in carbohydrate degradation; glycolysis; D-glyceraldehyde 3-phosphate and glycerone phosphate from D-glucose: step 3/4. Its activity is regulated as follows. Allosterically activated by ADP and other diphosphonucleosides, and allosterically inhibited by phosphoenolpyruvate. Catalyzes the phosphorylation of D-fructose 6-phosphate to fructose 1,6-bisphosphate by ATP, the first committing step of glycolysis. The sequence is that of ATP-dependent 6-phosphofructokinase from Geobacillus stearothermophilus (Bacillus stearothermophilus).